The chain runs to 164 residues: uncharacterized protein (164 aa).

Residues 26–158 (YAGFWVRFWA…DYIADTTVVH (133 aa)) enclose the RDD domain. Transmembrane regions (helical) follow at residues 35–55 (AFLLDWLVIWGLNHLLVSPLF) and 66–86 (MFTFSAYSVTTLIVYLAYFAL).

Its subcellular location is the cell membrane. This is an uncharacterized protein from Bacillus subtilis (strain 168).